The following is a 400-amino-acid chain: Formate-dependent phosphoribosylglycinamide formyltransferase (400 aa).

Residues 22 to 23 (EL) and glutamate 82 contribute to the N(1)-(5-phospho-beta-D-ribosyl)glycinamide site. ATP-binding positions include arginine 115, lysine 156, 161-166 (SSGKGQ), 196-199 (EGFI), and glutamate 204. Residues 120–309 (RLAAETLGLP…EFALHARAIL (190 aa)) form the ATP-grasp domain. 2 residues coordinate Mg(2+): glutamate 268 and glutamate 280. Residues aspartate 287, lysine 361, and 368–369 (RR) each bind N(1)-(5-phospho-beta-D-ribosyl)glycinamide.

This sequence belongs to the PurK/PurT family. Homodimer.

The catalysed reaction is N(1)-(5-phospho-beta-D-ribosyl)glycinamide + formate + ATP = N(2)-formyl-N(1)-(5-phospho-beta-D-ribosyl)glycinamide + ADP + phosphate + H(+). The protein operates within purine metabolism; IMP biosynthesis via de novo pathway; N(2)-formyl-N(1)-(5-phospho-D-ribosyl)glycinamide from N(1)-(5-phospho-D-ribosyl)glycinamide (formate route): step 1/1. Functionally, involved in the de novo purine biosynthesis. Catalyzes the transfer of formate to 5-phospho-ribosyl-glycinamide (GAR), producing 5-phospho-ribosyl-N-formylglycinamide (FGAR). Formate is provided by PurU via hydrolysis of 10-formyl-tetrahydrofolate. The polypeptide is Formate-dependent phosphoribosylglycinamide formyltransferase (Xanthomonas oryzae pv. oryzae (strain KACC10331 / KXO85)).